The following is a 330-amino-acid chain: Beta-ketoacyl-[acyl-carrier-protein] synthase III (330 aa).

Residues Cys114 and His257 contribute to the active site. An ACP-binding region spans residues 258–262 (QANLR). Residue Asn287 is part of the active site.

The protein belongs to the thiolase-like superfamily. FabH family. As to quaternary structure, homodimer.

It localises to the cytoplasm. It catalyses the reaction malonyl-[ACP] + acetyl-CoA + H(+) = 3-oxobutanoyl-[ACP] + CO2 + CoA. It participates in lipid metabolism; fatty acid biosynthesis. In terms of biological role, catalyzes the condensation reaction of fatty acid synthesis by the addition to an acyl acceptor of two carbons from malonyl-ACP. Catalyzes the first condensation reaction which initiates fatty acid synthesis and may therefore play a role in governing the total rate of fatty acid production. Possesses both acetoacetyl-ACP synthase and acetyl transacylase activities. Its substrate specificity determines the biosynthesis of branched-chain and/or straight-chain of fatty acids. The sequence is that of Beta-ketoacyl-[acyl-carrier-protein] synthase III from Nitratidesulfovibrio vulgaris (strain ATCC 29579 / DSM 644 / CCUG 34227 / NCIMB 8303 / VKM B-1760 / Hildenborough) (Desulfovibrio vulgaris).